We begin with the raw amino-acid sequence, 505 residues long: Amidophosphoribosyltransferase (505 aa).

The active-site Nucleophile is the Cys-2. The Glutamine amidotransferase type-2 domain maps to 2–236 (CGIVGIAGVM…PGEAIYITEE (235 aa)). Thr-305, Asp-367, and Asp-368 together coordinate Mg(2+).

In the C-terminal section; belongs to the purine/pyrimidine phosphoribosyltransferase family. As to quaternary structure, homotetramer. Mg(2+) serves as cofactor.

It catalyses the reaction 5-phospho-beta-D-ribosylamine + L-glutamate + diphosphate = 5-phospho-alpha-D-ribose 1-diphosphate + L-glutamine + H2O. The protein operates within purine metabolism; IMP biosynthesis via de novo pathway; N(1)-(5-phospho-D-ribosyl)glycinamide from 5-phospho-alpha-D-ribose 1-diphosphate: step 1/2. Inhibited by iodoacetamide and by the glutamine analogs chloroketone and DON. Functionally, catalyzes the formation of phosphoribosylamine from phosphoribosylpyrophosphate (PRPP) and glutamine. Can also use NH(3) in place of glutamine. The protein is Amidophosphoribosyltransferase of Escherichia coli (strain K12).